The chain runs to 203 residues: Thymidylate kinase (203 aa).

ATP is bound at residue 14–21 (GGEGIGKS).

The protein belongs to the thymidylate kinase family.

It carries out the reaction dTMP + ATP = dTDP + ADP. Functionally, phosphorylation of dTMP to form dTDP in both de novo and salvage pathways of dTTP synthesis. The polypeptide is Thymidylate kinase (Rickettsia africae (strain ESF-5)).